Consider the following 347-residue polypeptide: D-alanine--D-alanine ligase (347 aa).

The 203-residue stretch at 131 to 333 folds into the ATP-grasp domain; it reads KRVLESAGIA…YPELIERLVD (203 aa). 161 to 216 provides a ligand contact to ATP; the sequence is EEKLAYPVFTKPSNMGSSVGISKSENQEELRPALELAFRYDSRVLVEQGVNAREIE. Residues aspartate 287, glutamate 300, and asparagine 302 each coordinate Mg(2+).

The protein belongs to the D-alanine--D-alanine ligase family. It depends on Mg(2+) as a cofactor. The cofactor is Mn(2+).

The protein resides in the cytoplasm. The catalysed reaction is 2 D-alanine + ATP = D-alanyl-D-alanine + ADP + phosphate + H(+). It functions in the pathway cell wall biogenesis; peptidoglycan biosynthesis. Functionally, cell wall formation. The polypeptide is D-alanine--D-alanine ligase (Streptococcus pneumoniae (strain Taiwan19F-14)).